We begin with the raw amino-acid sequence, 153 residues long: Pheromone-binding protein Gp-9 (153 aa).

The first 19 residues, 1-19, serve as a signal peptide directing secretion; the sequence is MKTFVLHIFIFAFVAFASA. 3 disulfide bridges follow: C37–C77, C73–C129, and C118–C138.

The protein belongs to the PBP/GOBP family. As to quaternary structure, homodimer.

The protein localises to the secreted. Colony queen number, a major feature of social organization, is associated with worker genotype for Gp-9. Colonies are headed by either a single reproductive queen (monogyne form) or multiple queens (polygyne form). Differences in worker Gp-9 genotypes between social forms may cause differences in workers' abilities to recognize queens and regulate their numbers. The polypeptide is Pheromone-binding protein Gp-9 (Solenopsis amblychila (Desert fire ant)).